The sequence spans 550 residues: CTP synthase (550 aa).

The segment at M1 to L277 is amidoligase domain. S23 serves as a coordination point for CTP. S23 is a UTP binding site. S24–I29 contributes to the ATP binding site. Y64 serves as a coordination point for L-glutamine. D81 contacts ATP. Mg(2+) contacts are provided by D81 and E151. Residues D158–E160, K198–Q203, and K234 each bind CTP. Residues K198 to Q203 and K234 contribute to the UTP site. Residues K302–R549 form the Glutamine amidotransferase type-1 domain. G364 provides a ligand contact to L-glutamine. The Nucleophile; for glutamine hydrolysis role is filled by C391. Residues L392–Q395, E415, and R472 each bind L-glutamine. Active-site residues include H522 and E524.

Belongs to the CTP synthase family. As to quaternary structure, homotetramer.

The enzyme catalyses UTP + L-glutamine + ATP + H2O = CTP + L-glutamate + ADP + phosphate + 2 H(+). The catalysed reaction is L-glutamine + H2O = L-glutamate + NH4(+). It catalyses the reaction UTP + NH4(+) + ATP = CTP + ADP + phosphate + 2 H(+). It participates in pyrimidine metabolism; CTP biosynthesis via de novo pathway; CTP from UDP: step 2/2. Allosterically activated by GTP, when glutamine is the substrate; GTP has no effect on the reaction when ammonia is the substrate. The allosteric effector GTP functions by stabilizing the protein conformation that binds the tetrahedral intermediate(s) formed during glutamine hydrolysis. Inhibited by the product CTP, via allosteric rather than competitive inhibition. In terms of biological role, catalyzes the ATP-dependent amination of UTP to CTP with either L-glutamine or ammonia as the source of nitrogen. Regulates intracellular CTP levels through interactions with the four ribonucleotide triphosphates. This chain is CTP synthase, found in Thermus thermophilus (strain ATCC BAA-163 / DSM 7039 / HB27).